Reading from the N-terminus, the 169-residue chain is MSSIYRTVSRKEKPRRHHGLTTQKKQEIKEAFELFDTDGSGTIDAKELNVAMRALGFEMTEEQINKMIADVDKDGSGAIDFDEFVHMMTAKIGERDTKEELTKAFQIIDLDKNGKISPDDIKRMAKDLGENFTDAEIREMVEEADRDRDGEVNMDEFMRMMRRTAYGGN.

Positions Met-1 to Gln-23 are disordered. 4 consecutive EF-hand domains span residues Gln-23–Glu-58, Met-59–Glu-94, Asp-96–Asn-131, and Phe-132–Gly-167. The Ca(2+) site is built by Asp-36, Asp-38, Ser-40, Thr-42, Glu-47, Asp-72, Asp-74, Ser-76, Glu-83, Asp-109, Asp-111, Asn-113, Lys-115, Asp-120, Asp-145, Asp-147, Asp-149, Glu-151, and Glu-156.

Interacts with TON1A and TON1B. Interacts with SAC3A and SAC3B. Interacts with UCH1 and UCH2.

Functionally, potential calcium sensor. This chain is Probable calcium-binding protein CML20, found in Arabidopsis thaliana (Mouse-ear cress).